Consider the following 248-residue polypeptide: Transcription factor Spi-C (248 aa).

The ETS DNA-binding region spans 111–194; that stretch reads LRLFEYLHES…IRRKLTYQFS (84 aa).

The protein belongs to the ETS family. As to quaternary structure, binds DNA as a monomer.

It is found in the nucleus. In terms of biological role, controls the development of red pulp macrophages required for red blood cells recycling and iron homeostasis. Transcription factor that binds to the PU-box, a purine-rich DNA sequence (5'-GAGGA[AT]-3') that can act as a lymphoid-specific enhancer. Regulates VCAM1 gene expression. This chain is Transcription factor Spi-C (SPIC), found in Bos taurus (Bovine).